Consider the following 244-residue polypeptide: Sperm-egg fusion protein Juno (244 aa).

The N-terminal stretch at 1–19 is a signal peptide; sequence MAQWWLILLGLWTVLPSLA. Cystine bridges form between Cys27–Cys55, Cys47–Cys95, Cys56–Cys99, Cys79–Cys166, Cys86–Cys137, Cys126–Cys200, Cys130–Cys180, and Cys143–Cys160. The interval 62–81 is important for interaction with IZUMO1; that stretch reads WEAHLDEPLLFNFSMTHCGL. Asn73 carries an N-linked (GlcNAc...) asparagine glycan. Positions 223-244 are excised as a propeptide; sequence SASAPQLSYSITAFSLCLLLHA.

The protein belongs to the folate receptor family. In terms of assembly, monomer. Interacts with IZUMO1; the interaction is direct. IZUMO1 and IZUMO1R/JUNO form a complex with 1:1 stoichiometry. Interacts with FCRL3/MAIA; FCRL3/MAIA replaces IZUMO1R/JUNO as IZUMO1 receptor after sperm-egg adhesion, thereby permitting species-specific gamete fusion. Interacts with WDR54. Post-translationally, the protein is rapidly cleaved following fertilization, being only weakly detectable in zona-intact fertilized eggs at telophase II and undetectable at the pronuclear stage. Sheding is probably required to block to polyspermy and ensuring egg fusion with a single sperm. As to expression, expressed in the oocyte (at protein level).

The protein localises to the cell membrane. Its subcellular location is the cell projection. It is found in the microvillus membrane. In terms of biological role, receptor for IZUMO1 present at the cell surface of oocytes (oolemma), which is essential for species-specific gamete recognition and fertilization. The IZUMO1:IZUMO1R/JUNO interaction is a necessary adhesion event between sperm and egg that is required for fertilization but is not sufficient for cell fusion. The ligand-receptor interaction probably does not act as a membrane 'fusogen'. Does not bind folate. This chain is Sperm-egg fusion protein Juno (Izumo1r), found in Rattus norvegicus (Rat).